Here is an 816-residue protein sequence, read N- to C-terminus: Molybdenum cofactor sulfurase (816 aa).

An N6-(pyridoxal phosphate)lysine modification is found at Lys273. Cys427 is a catalytic residue. Residues 647–812 (NSDSQSHSCI…IRVGEEIIPN (166 aa)) form the MOSC domain.

Belongs to the class-V pyridoxal-phosphate-dependent aminotransferase family. MOCOS subfamily. It depends on pyridoxal 5'-phosphate as a cofactor. Ubiquitously expressed.

The catalysed reaction is Mo-molybdopterin + L-cysteine + AH2 = thio-Mo-molybdopterin + L-alanine + A + H2O. It participates in cofactor biosynthesis; molybdopterin biosynthesis. Its function is as follows. Sulfurates the molybdenum cofactor. Sulfation of molybdenum is essential for xanthine dehydrogenase (XDH) and aldehyde oxidase (ADO) enzymes in which molybdenum cofactor is liganded by 1 oxygen and 1 sulfur atom in active form. The sequence is that of Molybdenum cofactor sulfurase (FLACCA) from Solanum lycopersicum (Tomato).